The primary structure comprises 1040 residues: Multidrug resistance protein MdtB (1040 aa).

A run of 12 helical transmembrane segments spans residues 25–45 (LLMA…PVAA), 347–367 (LMLA…NIPA), 369–389 (IIPG…MVFL), 396–416 (LTLM…IVVI), 440–460 (IGFT…PLLF), 472–492 (FAVT…TLTP), 537–557 (WLTL…WIVI), 863–883 (LGST…VLGV), 888–908 (FIHP…ALLA), 910–930 (IIAG…LIGI), 968–988 (ILMT…STGV), and 998–1018 (IAMV…TPVI).

The protein belongs to the resistance-nodulation-cell division (RND) (TC 2.A.6) family. MdtB subfamily. As to quaternary structure, part of a tripartite efflux system composed of MdtA, MdtB and MdtC. MdtB forms a heteromultimer with MdtC.

The protein localises to the cell inner membrane. This chain is Multidrug resistance protein MdtB, found in Salmonella gallinarum (strain 287/91 / NCTC 13346).